Here is a 702-residue protein sequence, read N- to C-terminus: Ribosomal RNA large subunit methyltransferase K/L (702 aa).

The THUMP domain maps to 43 to 154; the sequence is LIYQSLMWSR…KETASIALDL (112 aa).

It belongs to the methyltransferase superfamily. RlmKL family.

It is found in the cytoplasm. The enzyme catalyses guanosine(2445) in 23S rRNA + S-adenosyl-L-methionine = N(2)-methylguanosine(2445) in 23S rRNA + S-adenosyl-L-homocysteine + H(+). It carries out the reaction guanosine(2069) in 23S rRNA + S-adenosyl-L-methionine = N(2)-methylguanosine(2069) in 23S rRNA + S-adenosyl-L-homocysteine + H(+). Specifically methylates the guanine in position 2445 (m2G2445) and the guanine in position 2069 (m7G2069) of 23S rRNA. The sequence is that of Ribosomal RNA large subunit methyltransferase K/L from Salmonella choleraesuis (strain SC-B67).